The sequence spans 426 residues: Cuticle-degrading serine protease (426 aa).

An N-terminal signal peptide occupies residues 1–21; it reads MLTNGLISLLAIAGLATNAFA. Positions 22-123 are excised as a propeptide; that stretch reads GPIRKVSNAG…VEQDTVVTTY (102 aa). Residues 39 to 122 enclose the Inhibitor I9 domain; it reads KYIVVLKKGL…YVEQDTVVTT (84 aa). The 297-residue stretch at 130–426 folds into the Peptidase S8 domain; the sequence is TWGLDRISHE…TNHQVTIVAS (297 aa). The Charge relay system role is filled by D164. An N-linked (GlcNAc...) asparagine glycan is attached at N178. H200 functions as the Charge relay system in the catalytic mechanism. A glycan (N-linked (GlcNAc...) asparagine) is linked at N252. The active-site Charge relay system is S353.

This sequence belongs to the peptidase S8 family.

Its subcellular location is the secreted. Inhibited by PMSF, SSI, the peptide Phe-Val and by Phe, but not by EDTA. Its function is as follows. Hydrolyzes gelatin, casein, the chromogenic substrate azocoll and the cuticle of the nematode P.redivivus. Immobilizes P.redivivus. The polypeptide is Cuticle-degrading serine protease (Orbilia oligospora (Nematode-trapping fungus)).